The sequence spans 1097 residues: RE1-silencing transcription factor (1097 aa).

The segment at 32–122 (DLHDLSKAEL…SLELSVVEPQ (91 aa)) is interaction with SIN3A. The tract at residues 43–57 (APQLIMLANVALTGE) is interaction with SIN3B. Disordered stretches follow at residues 83–103 (NFSDSEEGEGLEESADIKGEP) and 127–159 (ASGAPDIYSSNKDLPPETPGAEDKGKSSKTKPF). Acidic residues predominate over residues 86 to 96 (DSEEGEGLEES). The tract at residues 145-418 (PGAEDKGKSS…KSKHPTCPNK (274 aa)) is interaction with ZFP90. The C2H2-type 1 zinc-finger motif lies at 159-181 (FRCKPCQYEAESEEQFVHHIRVH). The interval 201 to 212 (SGSSTAEEGDFS) is required for binding to the neuron-restrictive silencer element. C2H2-type zinc fingers lie at residues 216–238 (IRCDRCGYNTNRYDHYTAHLKHH), 248–270 (YKCIICTYTTVSEYHWRKHLRNH), 276–298 (YTCGKCNYFSDRKNNYVQHVRTH), 304–326 (YKCELCPYSSSQKTHLTRHMRTH), 332–355 (FKCDQCSYVASNQHEVTRHARQVH), 361–383 (LNCPHCDYKTADRSNFKKHVELH), and 389–412 (FNCPVCDYAASKKCNLQYHFKSKH). The segment covering 452 to 479 (KIKGDVAGKKNEKSVKAEKRDVSKEKKP) has biased composition (basic and acidic residues). Disordered regions lie at residues 452–642 (KIKG…MEGA), 774–837 (KEPV…EQVL), 853–938 (ESVS…NGKH), and 961–1049 (GINS…NAKE). Residues 480–490 (SNNVSVIQVTT) are compositionally biased toward polar residues. 2 stretches are compositionally biased toward basic and acidic residues: residues 495 to 504 (SVTEVKEMDV) and 559 to 570 (PKGDSKVEENKK). Residues 577–593 (KSTKKKTLKNKSSKKSS) show a composition bias toward basic residues. Residues 803–836 (PPLHMEPISKKPPLRKDKKEKSNMQSERARKEQV) show a composition bias toward basic and acidic residues. Position 864 is a phosphoserine (S864). Residues 913–930 (INESTHISSSGQNLNTPE) are compositionally biased toward polar residues. S971 carries the post-translational modification Phosphoserine. The segment at 1009–1087 (EGIHSHEGSD…HLNRHLVNVY (79 aa)) is interaction with RCOR1. The C2H2-type 9 zinc finger occupies 1060–1082 (FVCIFCDRSFRKGKDYSKHLNRH).

In terms of assembly, isoform 1 and isoform 3 form heterodimers. Isoform 3: Forms homodimers and homooligomers; binds to the neuron-restrictive silencer element (NRSE) as monomer. Interacts with SIN3A, SIN3B and RCOR1. Interacts with CDYL. Interacts with EHMT1 and EHMT2 only in the presence of CDYL. Part of a complex containing at least CDYL, REST, WIZ, SETB1, EHMT1 and EHMT2. Interacts (via zinc-finger DNA-binding domain) with ZFP90 (via N- and C-termini); the interaction inhibits REST repressor activity. Interacts (via C2H2-type zinc finger 5) with PRICKLE1. Interacts with FBXW11 and BTRC. Interacts with USP7. In terms of processing, O-glycosylated. Phosphorylated; phosphorylation is required for ubiquitination. Post-translationally, ubiquitinated; ubiquitination is mediated by BTRC and leads to proteasomal degradation in G2 phase. Ubiquitination increases during neuronal differentiation. Deubiquitinated by USP7; leading to its stabilization and promoting the maintenance of neural progenitor cells. Expressed in neurons of the prefrontal cortex, in hippocampal pyramidal neurons, dentate gyrus granule neurons and cerebellar Purkinje and granule neurons (at protein level). Expressed in dopaminergic neurons of the substantia nigra (at protein level). Expressed in neural progenitor cells (at protein level). In patients suffering from Alzheimer disease, frontotemporal dementia or dementia with Lewy bodies, decreased nuclear levels have been observed in neurons of the prefrontal cortex and the hippocampus, but not in neurons of the dentate gyrus and cerebellum (at protein level). In patients with Parkinson disease or dementia with Lewy bodies, decreased nuclear levels have been observed in dopaminergic neurons and in cortical neurons and localization to Lewy bodies and pale bodies was detected (at protein level). Expressed at higher levels in weakly invasive breast cancer cell lines and at lower levels in highly invasive breast cancer lines (at protein level). Ubiquitous. Expressed at higher levels in the tissues of the lymphocytic compartment, including spleen, thymus, peripheral blood lymphocytes and ovary.

Its subcellular location is the nucleus. It localises to the cytoplasm. In terms of biological role, transcriptional repressor which binds neuron-restrictive silencer element (NRSE) and represses neuronal gene transcription in non-neuronal cells. Restricts the expression of neuronal genes by associating with two distinct corepressors, SIN3A and RCOR1, which in turn recruit histone deacetylase to the promoters of REST-regulated genes. Mediates repression by recruiting the BHC complex at RE1/NRSE sites which acts by deacetylating and demethylating specific sites on histones, thereby acting as a chromatin modifier. Transcriptional repression by REST-CDYL via the recruitment of histone methyltransferase EHMT2 may be important in transformation suppression. Represses the expression of SRRM4 in non-neural cells to prevent the activation of neural-specific splicing events and to prevent production of REST isoform 3. Repressor activity may be inhibited by forming heterodimers with isoform 3, thereby preventing binding to NRSE or binding to corepressors and leading to derepression of target genes. Also maintains repression of neuronal genes in neural stem cells, and allows transcription and differentiation into neurons by dissociation from RE1/NRSE sites of target genes. Thereby is involved in maintaining the quiescent state of adult neural stem cells and preventing premature differentiation into mature neurons. Plays a role in the developmental switch in synaptic NMDA receptor composition during postnatal development, by repressing GRIN2B expression and thereby altering NMDA receptor properties from containing primarily GRIN2B to primarily GRIN2A subunits. Acts as a regulator of osteoblast differentiation. Key repressor of gene expression in hypoxia; represses genes in hypoxia by direct binding to an RE1/NRSE site on their promoter regions. May also function in stress resistance in the brain during aging; possibly by regulating expression of genes involved in cell death and in the stress response. Repressor of gene expression in the hippocampus after ischemia by directly binding to RE1/NRSE sites and recruiting SIN3A and RCOR1 to promoters of target genes, thereby promoting changes in chromatin modifications and ischemia-induced cell death. After ischemia, might play a role in repression of miR-132 expression in hippocampal neurons, thereby leading to neuronal cell death. Negatively regulates the expression of SRRM3 in breast cancer cell lines. Its function is as follows. Binds to the 3' region of the neuron-restrictive silencer element (NRSE), with lower affinity than full-length REST isoform 1. Exhibits weaker repressor activity compared to isoform 1. May negatively regulate the repressor activity of isoform 1 by binding to isoform 1, thereby preventing its binding to NRSE and leading to derepression of target genes. However, in another study, does not appear to be implicated in repressor activity of a NRSE motif-containing reporter construct nor in inhibitory activity on the isoform 1 transcriptional repressor activity. Post-transcriptional inactivation of REST by SRRM4-dependent alternative splicing into isoform 3 is required in mechanosensory hair cells in the inner ear for derepression of neuronal genes and hearing. In Homo sapiens (Human), this protein is RE1-silencing transcription factor (REST).